A 220-amino-acid chain; its full sequence is Charged multivesicular body protein 2a (220 aa).

Coiled coils occupy residues 12-53 (EEML…MAKQ) and 199-220 (PSAA…LRRD). A disordered region spans residues 179-208 (LSNLPSTGGSLSVAGAKKGEPSAALADADA). An MIT-interacting motif motif is present at residues 208 to 218 (ADLEERLNNLR).

The protein belongs to the SNF7 family. As to quaternary structure, probable core component of the endosomal sorting required for transport complex III (ESCRT-III). ESCRT-III components are thought to multimerize to form a flat lattice on the perimeter membrane of the endosome.

Its subcellular location is the late endosome membrane. The protein resides in the cytoplasm. Probable core component of the endosomal sorting required for transport complex III (ESCRT-III) which is involved in multivesicular bodies (MVBs) formation and sorting of endosomal cargo proteins into MVBs. MVBs contain intraluminal vesicles (ILVs) that are generated by invagination and scission from the limiting membrane of the endosome and mostly are delivered to lysosomes enabling degradation of membrane proteins, such as stimulated growth factor receptors, lysosomal enzymes and lipids. This Xenopus tropicalis (Western clawed frog) protein is Charged multivesicular body protein 2a (chmp2a).